We begin with the raw amino-acid sequence, 30 residues long: Cytochrome b6-f complex subunit 8 (30 aa).

The helical transmembrane segment at 4–24 threads the bilayer; it reads IISLGWGSLLAIFSFSIALVV.

This sequence belongs to the PetN family. In terms of assembly, the 4 large subunits of the cytochrome b6-f complex are cytochrome b6, subunit IV (17 kDa polypeptide, PetD), cytochrome f and the Rieske protein, while the 4 small subunits are PetG, PetL, PetM and PetN. The complex functions as a dimer.

It localises to the plastid. The protein localises to the chloroplast thylakoid membrane. Functionally, component of the cytochrome b6-f complex, which mediates electron transfer between photosystem II (PSII) and photosystem I (PSI), cyclic electron flow around PSI, and state transitions. The chain is Cytochrome b6-f complex subunit 8 from Gracilaria tenuistipitata var. liui (Red alga).